The primary structure comprises 496 residues: Beta-amylase (496 aa).

Positions 54, 94, and 102 each coordinate substrate. Residue Glu187 is the Proton donor of the active site. 3 residues coordinate substrate: Lys296, His301, and Thr343. Residue Glu381 is the Proton acceptor of the active site. Residues 382 to 383 and Arg421 each bind substrate; that span reads NA.

It belongs to the glycosyl hydrolase 14 family.

The catalysed reaction is Hydrolysis of (1-&gt;4)-alpha-D-glucosidic linkages in polysaccharides so as to remove successive maltose units from the non-reducing ends of the chains.. In Vigna unguiculata (Cowpea), this protein is Beta-amylase (BMY1).